The chain runs to 428 residues: MRLLCAAFRARFGPVGGAKHRLENGCSFNKRMVMAKKRVVVLYGGRADEHSISCISTAGVLGAMDTERFEPIPVGITKDGKWIINGEDPRGWNLDGGELPTVKITPESRPVMLDPSRGQDGFFIGEPSHINSADSGFGTSFVSMSDPEMHHVLTSLGHVDAVLPVLHGPYGEDGTVQGLLEMMGVPYVGCGVFASAACMDKHYTKVVLDAAGIPTAPGVTVDARNFTAADVLAEIEDAGLTYPLFVKPSRAGSSFGVTKVEKADDRETQQDRLAAAIATAGEHDWKVLVEQGIDGREIECAVLCPKAGDEPEASWPGEIVLDHQNDDQFYDFDSKYMDASASHVEVPANLPVSVLEDVRDVARRAFKAVDGAGLSRVDTFVTPDGTVMVNEINTMPGFTPISMYPKAWDATGVSYTELITRLIEGVLR.

The region spanning 205–424 is the ATP-grasp domain; it reads KVVLDAAGIP…YTELITRLIE (220 aa). 237-299 contacts ATP; it reads DAGLTYPLFV…EQGIDGREIE (63 aa). Mg(2+) is bound by residues Asp378, Glu391, and Asn393.

It belongs to the D-alanine--D-alanine ligase family. Mg(2+) serves as cofactor. Mn(2+) is required as a cofactor.

The protein resides in the cytoplasm. It catalyses the reaction 2 D-alanine + ATP = D-alanyl-D-alanine + ADP + phosphate + H(+). Its pathway is cell wall biogenesis; peptidoglycan biosynthesis. In terms of biological role, cell wall formation. The chain is D-alanine--D-alanine ligase from Bifidobacterium longum (strain NCC 2705).